Consider the following 556-residue polypeptide: Small ribosomal subunit protein bS1 (556 aa).

S1 motif domains follow at residues 35–105, 120–183, 204–272, 289–359, 377–444, and 461–525; these read TIKE…ISQQ, NAII…ISRK, TEPV…LSIK, GYAI…VSLK, DVLE…LSAK, and DSVI…ASVH.

The protein belongs to the bacterial ribosomal protein bS1 family.

Its function is as follows. Binds mRNA; thus facilitating recognition of the initiation point. It is needed to translate mRNA with a short Shine-Dalgarno (SD) purine-rich sequence. In Helicobacter pylori (strain ATCC 700392 / 26695) (Campylobacter pylori), this protein is Small ribosomal subunit protein bS1 (rpsA).